Consider the following 379-residue polypeptide: Putative zinc metalloprotease BMEI0829 (379 aa).

Zn(2+) is bound at residue His-33. Glu-34 is an active-site residue. Residue His-37 participates in Zn(2+) binding. 4 helical membrane passes run 39–61 (LVAR…ELLG), 122–144 (VFAG…FALY), 305–327 (FDWL…LFPL), and 355–377 (IFYR…NDLF). A PDZ domain is found at 133-208 (TIAIFSVFFA…LNFTVERDGK (76 aa)).

Belongs to the peptidase M50B family. Zn(2+) is required as a cofactor.

It localises to the cell inner membrane. In Brucella melitensis biotype 1 (strain ATCC 23456 / CCUG 17765 / NCTC 10094 / 16M), this protein is Putative zinc metalloprotease BMEI0829.